A 323-amino-acid polypeptide reads, in one-letter code: Aspartate carbamoyltransferase catalytic subunit (323 aa).

Positions 55 and 56 each coordinate carbamoyl phosphate. K83 contacts L-aspartate. 3 residues coordinate carbamoyl phosphate: R105, H133, and Q136. Residues R166 and R220 each contribute to the L-aspartate site. The carbamoyl phosphate site is built by G261 and P262.

This sequence belongs to the aspartate/ornithine carbamoyltransferase superfamily. ATCase family. Heterododecamer (2C3:3R2) of six catalytic PyrB chains organized as two trimers (C3), and six regulatory PyrI chains organized as three dimers (R2).

It carries out the reaction carbamoyl phosphate + L-aspartate = N-carbamoyl-L-aspartate + phosphate + H(+). It participates in pyrimidine metabolism; UMP biosynthesis via de novo pathway; (S)-dihydroorotate from bicarbonate: step 2/3. In terms of biological role, catalyzes the condensation of carbamoyl phosphate and aspartate to form carbamoyl aspartate and inorganic phosphate, the committed step in the de novo pyrimidine nucleotide biosynthesis pathway. This chain is Aspartate carbamoyltransferase catalytic subunit, found in Acidothermus cellulolyticus (strain ATCC 43068 / DSM 8971 / 11B).